The chain runs to 750 residues: Sulfhydryl oxidase 1 (750 aa).

The signal sequence occupies residues 1-32; the sequence is MGRCNRGSGPPSSLLLLLLLLLWLLAVPGASA. The Thioredoxin domain occupies 39–159; that stretch reads YSPSDPLTLL…RERLIDALES (121 aa). Residues Cys-73 and Cys-76 each act as nucleophile in the active site. 2 cysteine pairs are disulfide-bonded: Cys-73–Cys-76 and Cys-104–Cys-113. N-linked (GlcNAc...) asparagine glycosylation is found at Asn-133 and Asn-246. A disulfide bridge connects residues Cys-396 and Cys-408. An ERV/ALR sulfhydryl oxidase domain is found at 399–506; it reads SEPHFRGFPC…EDPQFPKVQW (108 aa). The FAD site is built by Arg-404, Trp-411, and His-415. The residue at position 429 (Ser-429) is a Phosphoserine. A disulfide bridge links Cys-452 with Cys-455. FAD is bound by residues Asp-454, His-458, 481-488, Lys-503, and Trp-506; that span reads WSSHNRVN. Cys-512 and Cys-515 are disulfide-bonded. Asn-578 is a glycosylation site (N-linked (GlcNAc...) asparagine). The interval 578–645 is disordered; that stretch reads NSTVDLGKPE…REQPRGQWHL (68 aa). Over residues 624–639 the composition is skewed to basic and acidic residues; sequence PPEHMAELQTNEREQP. A helical membrane pass occupies residues 713–733; that stretch reads ISLCVGLYSLSFMGLLAMYAY.

This sequence belongs to the quiescin-sulfhydryl oxidase (QSOX) family. As to quaternary structure, monomer. Requires FAD as cofactor. In terms of processing, N-glycosylated. O-glycosylated on Thr and Ser residues.

It localises to the golgi apparatus membrane. The protein resides in the secreted. It carries out the reaction 2 R'C(R)SH + O2 = R'C(R)S-S(R)CR' + H2O2. In terms of biological role, catalyzes the oxidation of sulfhydryl groups in peptide and protein thiols to disulfides with the reduction of oxygen to hydrogen peroxide. Plays a role in disulfide bond formation in a variety of extracellular proteins. In fibroblasts, required for normal incorporation of laminin into the extracellular matrix, and thereby for normal cell-cell adhesion and cell migration. The polypeptide is Sulfhydryl oxidase 1 (QSOX1) (Pongo abelii (Sumatran orangutan)).